A 71-amino-acid chain; its full sequence is Putative membrane protein insertion efficiency factor (71 aa).

The protein belongs to the UPF0161 family.

It is found in the cell membrane. Functionally, could be involved in insertion of integral membrane proteins into the membrane. This Desulforudis audaxviator (strain MP104C) protein is Putative membrane protein insertion efficiency factor.